The sequence spans 142 residues: Large ribosomal subunit protein uL11 (142 aa).

The protein belongs to the universal ribosomal protein uL11 family. As to quaternary structure, part of the ribosomal stalk of the 50S ribosomal subunit. Interacts with L10 and the large rRNA to form the base of the stalk. L10 forms an elongated spine to which L12 dimers bind in a sequential fashion forming a multimeric L10(L12)X complex. Post-translationally, one or more lysine residues are methylated.

In terms of biological role, forms part of the ribosomal stalk which helps the ribosome interact with GTP-bound translation factors. The protein is Large ribosomal subunit protein uL11 of Mycobacteroides abscessus (strain ATCC 19977 / DSM 44196 / CCUG 20993 / CIP 104536 / JCM 13569 / NCTC 13031 / TMC 1543 / L948) (Mycobacterium abscessus).